The sequence spans 608 residues: Elongation factor 4 (608 aa).

Positions 11–193 (SKIRNFSIIA…QIVEKVPAPD (183 aa)) constitute a tr-type G domain. Residues 23-28 (DHGKST) and 140-143 (NKID) each bind GTP.

This sequence belongs to the TRAFAC class translation factor GTPase superfamily. Classic translation factor GTPase family. LepA subfamily.

The protein localises to the cell membrane. It carries out the reaction GTP + H2O = GDP + phosphate + H(+). Functionally, required for accurate and efficient protein synthesis under certain stress conditions. May act as a fidelity factor of the translation reaction, by catalyzing a one-codon backward translocation of tRNAs on improperly translocated ribosomes. Back-translocation proceeds from a post-translocation (POST) complex to a pre-translocation (PRE) complex, thus giving elongation factor G a second chance to translocate the tRNAs correctly. Binds to ribosomes in a GTP-dependent manner. This chain is Elongation factor 4, found in Bacillus cytotoxicus (strain DSM 22905 / CIP 110041 / 391-98 / NVH 391-98).